Reading from the N-terminus, the 129-residue chain is Cytochrome b5 (129 aa).

The 77-residue stretch at 8–84 (TTIYTHEEVA…LEKLYIGNLK (77 aa)) folds into the Cytochrome b5 heme-binding domain. Heme is bound by residues His-43 and His-67. The chain crosses the membrane as a helical span at residues 104 to 124 (GINFPLIAVGVFLAAFGVYYY).

Belongs to the cytochrome b5 family.

Its subcellular location is the endoplasmic reticulum membrane. It is found in the microsome membrane. Its function is as follows. Membrane bound hemoprotein which function as an electron carrier for several membrane bound oxygenases. This Candida tropicalis (Yeast) protein is Cytochrome b5 (Cytb5).